We begin with the raw amino-acid sequence, 251 residues long: 1-(5-phosphoribosyl)-5-[(5-phosphoribosylamino)methylideneamino] imidazole-4-carboxamide isomerase (251 aa).

The Proton acceptor role is filled by D8. Catalysis depends on D131, which acts as the Proton donor.

It belongs to the HisA/HisF family.

It is found in the cytoplasm. The catalysed reaction is 1-(5-phospho-beta-D-ribosyl)-5-[(5-phospho-beta-D-ribosylamino)methylideneamino]imidazole-4-carboxamide = 5-[(5-phospho-1-deoxy-D-ribulos-1-ylimino)methylamino]-1-(5-phospho-beta-D-ribosyl)imidazole-4-carboxamide. The protein operates within amino-acid biosynthesis; L-histidine biosynthesis; L-histidine from 5-phospho-alpha-D-ribose 1-diphosphate: step 4/9. The sequence is that of 1-(5-phosphoribosyl)-5-[(5-phosphoribosylamino)methylideneamino] imidazole-4-carboxamide isomerase from Burkholderia thailandensis (strain ATCC 700388 / DSM 13276 / CCUG 48851 / CIP 106301 / E264).